The chain runs to 503 residues: Inosine-5'-monophosphate dehydrogenase 1 (503 aa).

Serine 2 bears the N-acetylserine mark. In terms of domain architecture, CBS spans 167 to 225 (MKSCDSSDYCVPWEIDFEKLEFVLEDKQKGFVVLERDGETVNVVTKDDIQRVKGYPKSG). NAD(+)-binding positions include 265–267 (DSS) and 315–317 (GMG). Residues glycine 317 and glycine 319 each contribute to the K(+) site. Serine 320 contributes to the IMP binding site. Cysteine 322 contributes to the K(+) binding site. Cysteine 322 functions as the Thioimidate intermediate in the catalytic mechanism. Residues 355-357 (DGG), 378-379 (GS), and 402-406 (YRGMG) each bind IMP. Arginine 418 serves as the catalytic Proton acceptor. Glutamine 430 is a binding site for IMP. K(+) contacts are provided by glutamate 489, glycine 490, and glycine 491.

It belongs to the IMPDH/GMPR family. In terms of assembly, homotetramer. It depends on K(+) as a cofactor.

Its subcellular location is the cytoplasm. It catalyses the reaction IMP + NAD(+) + H2O = XMP + NADH + H(+). The protein operates within purine metabolism; XMP biosynthesis via de novo pathway; XMP from IMP: step 1/1. Its activity is regulated as follows. Mycophenolic acid (MPA) is a non-competitive inhibitor that prevents formation of the closed enzyme conformation by binding to the same site as the amobile flap. In contrast, mizoribine monophosphate (MZP) is a competitive inhibitor that induces the closed conformation. MPA is a potent inhibitor of mammalian IMPDHs but a poor inhibitor of the bacterial enzymes. MZP is a more potent inhibitor of bacterial IMPDH. Its function is as follows. Catalyzes the conversion of inosine 5'-phosphate (IMP) to xanthosine 5'-phosphate (XMP), the first committed and rate-limiting step in the de novo synthesis of guanine nucleotides, and therefore plays an important role in the regulation of cell growth. This chain is Inosine-5'-monophosphate dehydrogenase 1, found in Arabidopsis thaliana (Mouse-ear cress).